A 90-amino-acid polypeptide reads, in one-letter code: Caspase recruitment domain-containing protein 18 (90 aa).

A CARD domain is found at 1 to 90 (MADQLLRKKR…PQLASKMGLH (90 aa)).

In terms of assembly, interacts with pro-CASP1. Interacts with CARD8. In terms of tissue distribution, primarily expressed in the heart and placenta.

Inhibits generation of IL-1-beta by interacting with caspase-1 and preventing its association with RIP2. Down-regulates the release of IL1B. The sequence is that of Caspase recruitment domain-containing protein 18 (CARD18) from Homo sapiens (Human).